A 286-amino-acid polypeptide reads, in one-letter code: Transcription factor bHLH137 (286 aa).

Positions 63-84 (SGSEKLANTTKTATTGSSSCDQ) are enriched in polar residues. The disordered stretch occupies residues 63–149 (SGSEKLANTT…RGQATDSHSL (87 aa)). A bHLH domain is found at 142–192 (QATDSHSLAERVRREKISERMRTLQNLVPGCDKVTGKALMLDEIINYVQTL).

In terms of assembly, homodimer.

Its subcellular location is the nucleus. This chain is Transcription factor bHLH137 (BHLH137), found in Arabidopsis thaliana (Mouse-ear cress).